A 203-amino-acid chain; its full sequence is Small ribosomal subunit protein uS2 (203 aa).

This sequence belongs to the universal ribosomal protein uS2 family.

The polypeptide is Small ribosomal subunit protein uS2 (Methanopyrus kandleri (strain AV19 / DSM 6324 / JCM 9639 / NBRC 100938)).